We begin with the raw amino-acid sequence, 345 residues long: Probable galacturonosyltransferase-like 3 (345 aa).

At 1–7 (MSSLRLR) the chain is on the cytoplasmic side. A helical; Signal-anchor for type II membrane protein transmembrane segment spans residues 8–28 (LCLLLLLPITISCVTVTLTDL). Over 29 to 345 (PAFREAPAFR…FRYSPLISDS (317 aa)) the chain is Lumenal. N-linked (GlcNAc...) asparagine glycosylation is present at asparagine 197.

It belongs to the glycosyltransferase 8 family.

It is found in the golgi apparatus membrane. The protein operates within glycan metabolism; pectin biosynthesis. Its function is as follows. May be involved in pectin and/or xylans biosynthesis in cell walls. The polypeptide is Probable galacturonosyltransferase-like 3 (GATL3) (Arabidopsis thaliana (Mouse-ear cress)).